A 32-amino-acid polypeptide reads, in one-letter code: Delta-conotoxin-like MVID (32 aa).

3 cysteine pairs are disulfide-bonded: cysteine 3/cysteine 18, cysteine 10/cysteine 22, and cysteine 17/cysteine 27. Proline 14 bears the 4-hydroxyproline mark.

The protein belongs to the conotoxin O1 superfamily. In terms of tissue distribution, expressed by the venom duct.

The protein resides in the secreted. In terms of biological role, delta-conotoxins bind to site 6 of voltage-gated sodium channels (Nav) and inhibit the inactivation process. The chain is Delta-conotoxin-like MVID from Conus magus (Magical cone).